The chain runs to 99 residues: Citrate lyase acyl carrier protein (99 aa).

Ser14 carries the post-translational modification O-(phosphoribosyl dephospho-coenzyme A)serine.

Belongs to the CitD family. Oligomer with a subunit composition of (alpha,beta,gamma)6.

It is found in the cytoplasm. Covalent carrier of the coenzyme of citrate lyase. This is Citrate lyase acyl carrier protein from Edwardsiella ictaluri (strain 93-146).